A 343-amino-acid polypeptide reads, in one-letter code: UPF0324 membrane protein LJ_1117 (343 aa).

Transmembrane regions (helical) follow at residues 10–27, 32–54, 64–86, 91–113, 123–145, 157–179, 219–241, 262–284, 288–310, and 317–339; these read FGLA…GIFL, YVNL…VLPV, IGFI…LNLT, AGIK…TYWL, LAVL…VSPQ, NEVL…EIVI, ALIM…GYWY, IPWF…FPPV, GLVQ…SVNF, and GGTV…IIMS.

The protein belongs to the UPF0324 family.

The protein resides in the cell membrane. The chain is UPF0324 membrane protein LJ_1117 from Lactobacillus johnsonii (strain CNCM I-12250 / La1 / NCC 533).